The chain runs to 546 residues: Probable protein kinase UbiB (546 aa).

Residues 123–501 (DFDETPLASA…SRRQGQARYL (379 aa)) form the Protein kinase domain. ATP contacts are provided by residues 129-137 (LASASIAQV) and K152. D287 functions as the Proton acceptor in the catalytic mechanism. The next 2 helical transmembrane spans lie at 496 to 516 (GQAR…VFLL) and 521 to 541 (HIEW…LGWF).

The protein belongs to the ABC1 family. UbiB subfamily.

The protein localises to the cell inner membrane. The protein operates within cofactor biosynthesis; ubiquinone biosynthesis [regulation]. Its function is as follows. Is probably a protein kinase regulator of UbiI activity which is involved in aerobic coenzyme Q (ubiquinone) biosynthesis. This is Probable protein kinase UbiB from Aeromonas salmonicida (strain A449).